Consider the following 197-residue polypeptide: dITP/XTP pyrophosphatase (197 aa).

8–13 is a binding site for substrate; sequence TGNAGK. Residues Glu40 and Asp69 each contribute to the Mg(2+) site. Catalysis depends on Asp69, which acts as the Proton acceptor. Residues Ser70, 154–157, Lys177, and 182–183 contribute to the substrate site; these read FGYD and HR.

This sequence belongs to the HAM1 NTPase family. Homodimer. Mg(2+) serves as cofactor.

It catalyses the reaction XTP + H2O = XMP + diphosphate + H(+). The catalysed reaction is dITP + H2O = dIMP + diphosphate + H(+). It carries out the reaction ITP + H2O = IMP + diphosphate + H(+). Its function is as follows. Pyrophosphatase that catalyzes the hydrolysis of nucleoside triphosphates to their monophosphate derivatives, with a high preference for the non-canonical purine nucleotides XTP (xanthosine triphosphate), dITP (deoxyinosine triphosphate) and ITP. Seems to function as a house-cleaning enzyme that removes non-canonical purine nucleotides from the nucleotide pool, thus preventing their incorporation into DNA/RNA and avoiding chromosomal lesions. The sequence is that of dITP/XTP pyrophosphatase (rdgB) from Escherichia coli O157:H7.